Consider the following 475-residue polypeptide: UDP-N-acetylmuramate--L-alanine ligase (475 aa).

125 to 131 (GTHGKTS) contributes to the ATP binding site.

The protein belongs to the MurCDEF family.

It is found in the cytoplasm. It catalyses the reaction UDP-N-acetyl-alpha-D-muramate + L-alanine + ATP = UDP-N-acetyl-alpha-D-muramoyl-L-alanine + ADP + phosphate + H(+). It participates in cell wall biogenesis; peptidoglycan biosynthesis. In terms of biological role, cell wall formation. This chain is UDP-N-acetylmuramate--L-alanine ligase, found in Mycolicibacterium gilvum (strain PYR-GCK) (Mycobacterium gilvum (strain PYR-GCK)).